We begin with the raw amino-acid sequence, 348 residues long: Histidinol-phosphate aminotransferase (348 aa).

Lys210 bears the N6-(pyridoxal phosphate)lysine mark.

It belongs to the class-II pyridoxal-phosphate-dependent aminotransferase family. Histidinol-phosphate aminotransferase subfamily. In terms of assembly, homodimer. Requires pyridoxal 5'-phosphate as cofactor.

It carries out the reaction L-histidinol phosphate + 2-oxoglutarate = 3-(imidazol-4-yl)-2-oxopropyl phosphate + L-glutamate. It participates in amino-acid biosynthesis; L-histidine biosynthesis; L-histidine from 5-phospho-alpha-D-ribose 1-diphosphate: step 7/9. The sequence is that of Histidinol-phosphate aminotransferase from Pseudomonas putida (strain ATCC 700007 / DSM 6899 / JCM 31910 / BCRC 17059 / LMG 24140 / F1).